The following is a 198-amino-acid chain: Superoxide dismutase [Fe] (198 aa).

The Fe cation site is built by His27, His74, Asp157, and His161.

The protein belongs to the iron/manganese superoxide dismutase family. Homodimer. Requires Fe cation as cofactor.

The catalysed reaction is 2 superoxide + 2 H(+) = H2O2 + O2. Functionally, destroys superoxide anion radicals which are normally produced within the cells and which are toxic to biological systems. The sequence is that of Superoxide dismutase [Fe] (sodB) from Pseudomonas putida (strain ATCC 47054 / DSM 6125 / CFBP 8728 / NCIMB 11950 / KT2440).